The sequence spans 179 residues: Large ribosomal subunit protein uL5 (179 aa).

This sequence belongs to the universal ribosomal protein uL5 family. In terms of assembly, part of the 50S ribosomal subunit; part of the 5S rRNA/L5/L18/L25 subcomplex. Contacts the 5S rRNA and the P site tRNA. Forms a bridge to the 30S subunit in the 70S ribosome.

Its function is as follows. This is one of the proteins that bind and probably mediate the attachment of the 5S RNA into the large ribosomal subunit, where it forms part of the central protuberance. In the 70S ribosome it contacts protein S13 of the 30S subunit (bridge B1b), connecting the 2 subunits; this bridge is implicated in subunit movement. Contacts the P site tRNA; the 5S rRNA and some of its associated proteins might help stabilize positioning of ribosome-bound tRNAs. The sequence is that of Large ribosomal subunit protein uL5 from Nitrosospira multiformis (strain ATCC 25196 / NCIMB 11849 / C 71).